The following is a 60-amino-acid chain: Short neurotoxin 1 (60 aa).

4 disulfides stabilise this stretch: C3–C22, C17–C39, C41–C52, and C53–C58.

This sequence belongs to the three-finger toxin family. Short-chain subfamily. Type I alpha-neurotoxin sub-subfamily. In terms of tissue distribution, expressed by the venom gland.

Its subcellular location is the secreted. In terms of biological role, binds to muscle nicotinic acetylcholine receptor (nAChR) and inhibit acetylcholine from binding to the receptor, thereby impairing neuromuscular transmission. The protein is Short neurotoxin 1 of Hydrophis ornatus (Ornate reef seasnake).